The chain runs to 147 residues: ATP synthase subunit 9, mitochondrial (147 aa).

The transit peptide at 1 to 66 directs the protein to the mitochondrion; sequence MASTRVLASR…TTRQAFQKRA (66 aa). Helical transmembrane passes span 86–106 and 123–143; these read SAAIGLTGAGIGIGLVFAALL and AILGFAFVEAIGLFDLMVALM.

This sequence belongs to the ATPase C chain family. F-type ATPases have 2 components, CF(1) - the catalytic core - and CF(0) - the membrane proton channel. CF(1) has five subunits: alpha(3), beta(3), gamma(1), delta(1), epsilon(1). CF(0) has three main subunits: a, b and c.

Its subcellular location is the mitochondrion membrane. Mitochondrial membrane ATP synthase (F(1)F(0) ATP synthase or Complex V) produces ATP from ADP in the presence of a proton gradient across the membrane which is generated by electron transport complexes of the respiratory chain. F-type ATPases consist of two structural domains, F(1) - containing the extramembraneous catalytic core and F(0) - containing the membrane proton channel, linked together by a central stalk and a peripheral stalk. During catalysis, ATP synthesis in the catalytic domain of F(1) is coupled via a rotary mechanism of the central stalk subunits to proton translocation. Part of the complex F(0) domain. A homomeric c-ring of probably 10 subunits is part of the complex rotary element. This Neurospora crassa (strain ATCC 24698 / 74-OR23-1A / CBS 708.71 / DSM 1257 / FGSC 987) protein is ATP synthase subunit 9, mitochondrial (oli).